Here is a 492-residue protein sequence, read N- to C-terminus: N-succinylglutamate 5-semialdehyde dehydrogenase (492 aa).

Gly220–Gly225 is a binding site for NAD(+). Catalysis depends on residues Glu243 and Cys277.

Belongs to the aldehyde dehydrogenase family. AstD subfamily.

It carries out the reaction N-succinyl-L-glutamate 5-semialdehyde + NAD(+) + H2O = N-succinyl-L-glutamate + NADH + 2 H(+). It functions in the pathway amino-acid degradation; L-arginine degradation via AST pathway; L-glutamate and succinate from L-arginine: step 4/5. Catalyzes the NAD-dependent reduction of succinylglutamate semialdehyde into succinylglutamate. This is N-succinylglutamate 5-semialdehyde dehydrogenase from Escherichia coli O127:H6 (strain E2348/69 / EPEC).